A 312-amino-acid chain; its full sequence is Small ribosomal subunit protein uS2 (312 aa).

The protein belongs to the universal ribosomal protein uS2 family.

The polypeptide is Small ribosomal subunit protein uS2 (Ruthia magnifica subsp. Calyptogena magnifica).